Reading from the N-terminus, the 591-residue chain is Probable acetolactate synthase large subunit (591 aa).

E47 lines the thiamine diphosphate pocket. Residues R149, 258–279 (HGTKAANYAVTECDVLIAIGCR), and 301–320 (DIDPAEIGKNVRADIPIVGD) each bind FAD. Residues 396 to 476 (QNQMWMAHFF…VVICIFDNRT (81 aa)) form a thiamine pyrophosphate binding region. Residues D447 and N474 each coordinate Mg(2+).

It belongs to the TPP enzyme family. Dimer of large and small chains. Mg(2+) is required as a cofactor. Thiamine diphosphate serves as cofactor.

The enzyme catalyses 2 pyruvate + H(+) = (2S)-2-acetolactate + CO2. It participates in amino-acid biosynthesis; L-isoleucine biosynthesis; L-isoleucine from 2-oxobutanoate: step 1/4. The protein operates within amino-acid biosynthesis; L-valine biosynthesis; L-valine from pyruvate: step 1/4. In Methanocaldococcus jannaschii (strain ATCC 43067 / DSM 2661 / JAL-1 / JCM 10045 / NBRC 100440) (Methanococcus jannaschii), this protein is Probable acetolactate synthase large subunit (ilvB).